The following is a 280-amino-acid chain: 4-diphosphocytidyl-2-C-methyl-D-erythritol kinase (280 aa).

K8 is a catalytic residue. Residue 91–101 participates in ATP binding; sequence PVSAGLAGGST. Residue D133 is part of the active site.

Belongs to the GHMP kinase family. IspE subfamily.

The enzyme catalyses 4-CDP-2-C-methyl-D-erythritol + ATP = 4-CDP-2-C-methyl-D-erythritol 2-phosphate + ADP + H(+). Its pathway is isoprenoid biosynthesis; isopentenyl diphosphate biosynthesis via DXP pathway; isopentenyl diphosphate from 1-deoxy-D-xylulose 5-phosphate: step 3/6. Catalyzes the phosphorylation of the position 2 hydroxy group of 4-diphosphocytidyl-2C-methyl-D-erythritol. The protein is 4-diphosphocytidyl-2-C-methyl-D-erythritol kinase of Clostridium beijerinckii (strain ATCC 51743 / NCIMB 8052) (Clostridium acetobutylicum).